The sequence spans 180 residues: ATP synthase subunit delta (180 aa).

It belongs to the ATPase delta chain family. In terms of assembly, F-type ATPases have 2 components, F(1) - the catalytic core - and F(0) - the membrane proton channel. F(1) has five subunits: alpha(3), beta(3), gamma(1), delta(1), epsilon(1). CF(0) has four main subunits: a(1), b(1), b'(1) and c(10-14). The alpha and beta chains form an alternating ring which encloses part of the gamma chain. F(1) is attached to F(0) by a central stalk formed by the gamma and epsilon chains, while a peripheral stalk is formed by the delta, b and b' chains.

It is found in the cellular thylakoid membrane. Its function is as follows. F(1)F(0) ATP synthase produces ATP from ADP in the presence of a proton or sodium gradient. F-type ATPases consist of two structural domains, F(1) containing the extramembraneous catalytic core and F(0) containing the membrane proton channel, linked together by a central stalk and a peripheral stalk. During catalysis, ATP synthesis in the catalytic domain of F(1) is coupled via a rotary mechanism of the central stalk subunits to proton translocation. Functionally, this protein is part of the stalk that links CF(0) to CF(1). It either transmits conformational changes from CF(0) to CF(1) or is implicated in proton conduction. This is ATP synthase subunit delta from Prochlorococcus marinus (strain MIT 9312).